A 554-amino-acid chain; its full sequence is (+)-delta-cadinene synthase isozyme XC1 (554 aa).

Residues Met1–Ser16 are compositionally biased toward low complexity. A disordered region spans residues Met1–Pro23. Asp307, Asp311, Asp451, and Glu455 together coordinate Mg(2+). The DDXXD motif signature appears at Asp307–Asp311.

It belongs to the terpene synthase family. Mg(2+) serves as cofactor.

The catalysed reaction is (2E,6E)-farnesyl diphosphate = (1S,8aR)-delta-cadinene + diphosphate. Its pathway is secondary metabolite biosynthesis; terpenoid biosynthesis. In terms of biological role, responsible for the cyclization of trans,trans-farnesyl diphosphate (FPP) to (+)-delta cadinene. The protein is (+)-delta-cadinene synthase isozyme XC1 of Gossypium arboreum (Tree cotton).